We begin with the raw amino-acid sequence, 172 residues long: Ribosome maturation factor RimM (172 aa).

The 74-residue stretch at 95–168 (AEGEFYYHQI…RVDVEIMEGL (74 aa)) folds into the PRC barrel domain.

It belongs to the RimM family. As to quaternary structure, binds ribosomal protein uS19.

It localises to the cytoplasm. An accessory protein needed during the final step in the assembly of 30S ribosomal subunit, possibly for assembly of the head region. Essential for efficient processing of 16S rRNA. May be needed both before and after RbfA during the maturation of 16S rRNA. It has affinity for free ribosomal 30S subunits but not for 70S ribosomes. This Streptococcus equi subsp. zooepidemicus (strain H70) protein is Ribosome maturation factor RimM.